Here is a 377-residue protein sequence, read N- to C-terminus: Glutamate 5-kinase (377 aa).

Residue lysine 17 participates in ATP binding. Substrate contacts are provided by serine 56, aspartate 143, and asparagine 155. 217–223 provides a ligand contact to ATP; sequence SGGMFSK. In terms of domain architecture, PUA spans 282-360; sequence AGDLVIDDGA…CEIESILGKC (79 aa).

It belongs to the glutamate 5-kinase family.

Its subcellular location is the cytoplasm. It catalyses the reaction L-glutamate + ATP = L-glutamyl 5-phosphate + ADP. It functions in the pathway amino-acid biosynthesis; L-proline biosynthesis; L-glutamate 5-semialdehyde from L-glutamate: step 1/2. Functionally, catalyzes the transfer of a phosphate group to glutamate to form L-glutamate 5-phosphate. The protein is Glutamate 5-kinase of Maridesulfovibrio salexigens (strain ATCC 14822 / DSM 2638 / NCIMB 8403 / VKM B-1763) (Desulfovibrio salexigens).